Consider the following 286-residue polypeptide: Octanoyltransferase (286 aa).

Positions 50 to 278 constitute a BPL/LPL catalytic domain; it reads LRTPDELWIV…NIAQRHAGVI (229 aa). Substrate is bound by residues 89 to 96, 190 to 192, and 203 to 205; these read RGGQVTWH, SLG, and GVA. C221 serves as the catalytic Acyl-thioester intermediate.

This sequence belongs to the LipB family.

Its subcellular location is the cytoplasm. The enzyme catalyses octanoyl-[ACP] + L-lysyl-[protein] = N(6)-octanoyl-L-lysyl-[protein] + holo-[ACP] + H(+). The protein operates within protein modification; protein lipoylation via endogenous pathway; protein N(6)-(lipoyl)lysine from octanoyl-[acyl-carrier-protein]: step 1/2. In terms of biological role, catalyzes the transfer of endogenously produced octanoic acid from octanoyl-acyl-carrier-protein onto the lipoyl domains of lipoate-dependent enzymes. Lipoyl-ACP can also act as a substrate although octanoyl-ACP is likely to be the physiological substrate. This chain is Octanoyltransferase, found in Psychrobacter arcticus (strain DSM 17307 / VKM B-2377 / 273-4).